The primary structure comprises 265 residues: MADTTTAAQADQKPTRAFGAGRPQRGAGGAPQRGGPRPQRGGQGETKSWTPVTKLGRLVALGLVENIHEIYLFSLPIKEYQIIDKFLNLKDEVMKIVPVQKQTRAGQRTRFKAFVVVGDHNGHVGLGVKCAKEVATAISGAIVAAKLSVIPVRRGYWGNKLGAPHTVPTKVTGKCGSVAVRLVPAPRGTGIVAARVPKKLLQYAGVDDVYTSSRGKTRTMGNFVMATFFAITKTFAYLTPDLWREVKLIKTPYQEHSAKLSEKQQ.

Low complexity predominate over residues 1–25 (MADTTTAAQADQKPTRAFGAGRPQR). The segment at 1-49 (MADTTTAAQADQKPTRAFGAGRPQRGAGGAPQRGGPRPQRGGQGETKSW) is disordered. Position 2 is an N-acetylalanine (alanine 2). The S5 DRBM domain occupies 89 to 152 (LKDEVMKIVP…VAAKLSVIPV (64 aa)).

It belongs to the universal ribosomal protein uS5 family.

In terms of biological role, component of the ribosome, a large ribonucleoprotein complex responsible for the synthesis of proteins in the cell. The small ribosomal subunit (SSU) binds messenger RNAs (mRNAs) and translates the encoded message by selecting cognate aminoacyl-transfer RNA (tRNA) molecules. The large subunit (LSU) contains the ribosomal catalytic site termed the peptidyl transferase center (PTC), which catalyzes the formation of peptide bonds, thereby polymerizing the amino acids delivered by tRNAs into a polypeptide chain. The nascent polypeptides leave the ribosome through a tunnel in the LSU and interact with protein factors that function in enzymatic processing, targeting, and the membrane insertion of nascent chains at the exit of the ribosomal tunnel. Plays a role in the assembly and function of the 40S ribosomal subunit. Mutations in this protein affects the control of translational fidelity. Involved in nucleolar processing of pre-18S ribosomal RNA and ribosome assembly. The protein is Small ribosomal subunit protein uS5 (rps2) of Dictyostelium discoideum (Social amoeba).